Here is a 930-residue protein sequence, read N- to C-terminus: Nonribosomal peptide synthetase acyN (930 aa).

Residues 15-436 (LDPQDNKISV…AGRAKETIIV (422 aa)) are adenylation (A) domain. The Carrier domain occupies 567-646 (APSNETEATI…GLAGTLETLM (80 aa)). S604 bears the O-(pantetheine 4'-phosphoryl)serine mark. Residues 665–914 (PLWLVHPGVG…HYTMLGPDNI (250 aa)) form a thioesterase (TE) domain region.

It belongs to the NRP synthetase family.

It catalyses the reaction 2 3-phenylpyruvate + 2 ATP = polyporic acid + 2 AMP + 2 diphosphate + H(+). Its pathway is secondary metabolite biosynthesis. With respect to regulation, hydroxyphenylpyruvate acts more like a competitive inhibitor rather than a substrate. Its function is as follows. Nonribosomal peptide synthetase that mediates the biosynthesis of polyporic acid via the condensation of 2 phenylpyruvate units. Polyporic acid is further hydroxylaed by the cytochrome P450 monooxygenase MO6277 into less toxic ascocorynin. This Ascocoryne sarcoides (Purple jellydisc fungus) protein is Nonribosomal peptide synthetase acyN.